The primary structure comprises 175 residues: Cytochrome c homolog (175 aa).

At methionine 1–lysine 8 the chain is on the cytoplasmic side. A helical; Signal-anchor membrane pass occupies residues isoleucine 9 to isoleucine 29. Residues leucine 30–lysine 175 are Periplasmic-facing. Residues cysteine 84, cysteine 87, histidine 88, and methionine 150 each coordinate heme c.

This sequence belongs to the cytochrome c family. Post-translationally, binds 1 heme c group covalently per subunit.

It is found in the cell membrane. May be involved in electron transfer from bc1 complex to aa3. In Rickettsia felis (strain ATCC VR-1525 / URRWXCal2) (Rickettsia azadi), this protein is Cytochrome c homolog (cycM).